A 590-amino-acid chain; its full sequence is MLKPGDPGGSAFLKVDPAYLQHWQQLFPHGGGGPLKGGGAAGPLGAPQPLQPPPPPERAEPQPDSLRPRPASLSSASSTPASSSTSASSASSCAAAAAAAAAAALAGLSALPVAQLPVFAPLATVAAEPLPPKDLCLGATSGPGPSKCGGSGGDGRGVPRFRCSAEELDYYLYGQQRMEIIPLNQHTSDPNNRCDMCADNRNGECPMHGPLHSLRRLVGTSSAAAAAPPPELPEWLRDLPREVCLCTSTVPGLAYGICAAQRIQQGTWIGPFQGVLLPPEKVQAGAVRNTQHLWEIYDQDGTLQHFIDGGEPSKSSWMRYIRCARHCGEQNLTVVQYRSNIFYRACIDIPRGTELLVWYNDSYTSFFGIPLQCIAQDENLNVPSTVMEAMCRQDALQPFNKSSKLSQAPQQRSVVFPQTPCGRNFSLLDKSGPLESGFNQISVKNQRVLASPTSTSQLHSEFSDWHLWKCGQCFKTFTQRILLQMHVCTQNPDRPYQCGHCSQSFSQPSELRNHVVTHSSDRPFKCGYCGRAFAGATTLNNHIRTHTGEKPFKCERCERSFTQATQLSRHQRMPNECKPITESPESIEVD.

Residues 25–87 are disordered; sequence QLFPHGGGGP…STPASSSTSA (63 aa). The segment covering 29–42 has biased composition (gly residues); that stretch reads HGGGGPLKGGGAAG. Residues 71–87 show a composition bias toward low complexity; sequence ASLSSASSTPASSSTSA. The SET domain maps to 241–360; that stretch reads REVCLCTSTV…RGTELLVWYN (120 aa). A C2H2-type 1; degenerate zinc finger spans residues 468–490; sequence WKCGQCFKTFTQRILLQMHVCTQ. 2 C2H2-type zinc fingers span residues 496-518 and 524-546; these read YQCGHCSQSFSQPSELRNHVVTH and FKCGYCGRAFAGATTLNNHIRTH. The segment at 552 to 574 adopts a C2H2-type 4; degenerate zinc-finger fold; it reads FKCERCERSFTQATQLSRHQRMP.

It belongs to the class V-like SAM-binding methyltransferase superfamily. Interacts with HDAC1, HDAC2, HDAC3, CBX1 and EP300.

It is found in the nucleus. The catalysed reaction is L-lysyl(20)-[histone H4] + S-adenosyl-L-methionine = N(6)-methyl-L-lysyl(20)-[histone H4] + S-adenosyl-L-homocysteine + H(+). Functionally, putative histone methyltransferase that acts as a transcriptional repressor of smooth muscle gene expression. Promotes the transition from differentiated to proliferative smooth muscle by suppressing differentiation and maintaining the proliferative potential of vascular smooth muscle cells. Also plays a role in endothelial cells by inhibiting endothelial cell proliferation, survival and differentiation. It is unclear whether it has histone methyltransferase activity in vivo. According to some authors, it does not act as a histone methyltransferase by itself and represses transcription by recruiting EHMT2/G9a. According to others, it possesses histone methyltransferase activity when associated with other proteins and specifically methylates 'Lys-20' of histone H4 in vitro. 'Lys-20' methylation represents a specific tag for epigenetic transcriptional repression. The polypeptide is Putative histone-lysine N-methyltransferase PRDM6 (PRDM6) (Bos taurus (Bovine)).